A 1353-amino-acid chain; its full sequence is Stress response protein NST1 (1353 aa).

A compositionally biased stretch (polar residues) spans 1–12; it reads MSSKSQQPPTGL. Disordered regions lie at residues 1 to 66, 216 to 422, 503 to 522, 531 to 618, 652 to 694, 727 to 882, 979 to 1119, 1140 to 1276, and 1308 to 1337; these read MSSK…FFNF, NANA…TQSS, NGLRPPPSGAGPFPGSVEVD, DHRA…SFGS, RRSV…AEEG, LREL…AKET, GLKS…DDAF, GSLI…GAGV, and GGTAGSGLVQGHVGGGGYSQGLFSPQHQQQ. A compositionally biased stretch (basic residues) spans 16–25; that stretch reads AAKKRAKKAA. Positions 26 to 45 are enriched in low complexity; the sequence is KQSQNPQPQSAPQTSSQTPA. Residues 46–59 show a composition bias toward pro residues; that stretch reads SVPPLPPASVPDPL. Positions 218-229 are enriched in polar residues; that stretch reads NARSFPSPQQTI. Residues 242–254 are compositionally biased toward acidic residues; the sequence is REEEYDDEEEIEE. The span at 268–277 shows a compositional bias: basic residues; sequence KKNKKKKKKG. Pro residues predominate over residues 287–300; sequence VEPPAPLPPLPPPS. Over residues 317–330 the composition is skewed to low complexity; that stretch reads LPTHQPQPLSQQPP. Over residues 331-349 the composition is skewed to pro residues; the sequence is SLNPLPPPAPASAPTPTPP. Positions 368-388 are enriched in low complexity; the sequence is PARSARAAGKAPASAAPPHNA. Basic and acidic residues predominate over residues 531–541; that stretch reads DHRAPELHDHD. Residues 542–583 are compositionally biased toward acidic residues; sequence PDDLDGEESEEYDDDDDYADDDELDDDDIGTDEADVGDEIDE. Basic and acidic residues predominate over residues 654–665; it reads SVREEQNLRDMQ. The span at 666-681 shows a compositional bias: acidic residues; the sequence is EETDEEEEEEDDDESR. 3 stretches are compositionally biased toward basic and acidic residues: residues 682–694, 727–750, and 760–882; these read DEPMTEKERAEEG, LRELEEEEDSKRAKEEKKAKEAQK, and QKAE…AKET. The stretch at 713-944 forms a coiled coil; the sequence is AYRERVAKQR…AAQQAQRERA (232 aa). Over residues 1009–1021 the composition is skewed to polar residues; sequence TNATPGRSMQKTP. The span at 1154–1165 shows a compositional bias: pro residues; sequence PTPPAPIAPPNL. 2 stretches are compositionally biased toward polar residues: residues 1174-1187 and 1209-1220; these read SDGQTSGPNVLRST and QPQQRRPTTSWD.

The protein belongs to the NST1 family.

The protein localises to the cytoplasm. Its function is as follows. May act as a negative regulator of salt tolerance. This is Stress response protein NST1 (NST1) from Cryptococcus neoformans var. neoformans serotype D (strain B-3501A) (Filobasidiella neoformans).